We begin with the raw amino-acid sequence, 506 residues long: Zinc finger and SCAN domain containing protein 4D (506 aa).

The 83-residue stretch at 37 to 119 folds into the SCAN box domain; that stretch reads SAQLNFSPSN…RFMESLTDEC (83 aa). The segment at 238–264 is disordered; it reads SQGNSSHHVDFRSAPTPADVPMEEQPK. C2H2-type zinc fingers lie at residues 395–417, 424–446, 452–474, and 480–503; these read FKCE…QRTH, LLCV…EIIH, FKCS…EMIH, and YVCS…RNYH.

In terms of tissue distribution, highly expressed at the 2-cell stage but its expression is rapidly turned off.

The protein localises to the nucleus. Its subcellular location is the chromosome. It localises to the telomere. Its function is as follows. Transcription factor required to regulate early development. Binds telomeres and plays a key role in genomic stability by regulating telomere elongation. Acts as an activator of spontaneous telomere sister chromatid exchange (T-SCE) and telomere elongation. The sequence is that of Zinc finger and SCAN domain containing protein 4D (Zscan4d) from Mus musculus (Mouse).